The chain runs to 502 residues: Mannitol dehydrogenase 2 (502 aa).

Belongs to the mannitol dehydrogenase family.

The enzyme catalyses D-mannitol + NAD(+) = D-fructose + NADH + H(+). Catalyzes the NAD(H)-dependent interconversion of D-fructose and D-mannitol in the mannitol metabolic pathway. This Saccharomyces cerevisiae (strain ATCC 204508 / S288c) (Baker's yeast) protein is Mannitol dehydrogenase 2.